The following is a 192-amino-acid chain: Phosphoheptose isomerase (192 aa).

Residues 37–192 enclose the SIS domain; it reads LADSFKQEGK…IQLVEKEMAK (156 aa). 52–54 is a substrate binding site; sequence NGG. Zn(2+) contacts are provided by histidine 61 and glutamate 65. Residues glutamate 65, 93-94, 119-121, serine 124, and glutamine 172 contribute to the substrate site; these read ND and STS. Zn(2+)-binding residues include glutamine 172 and histidine 180.

This sequence belongs to the SIS family. GmhA subfamily. Homotetramer. Zn(2+) is required as a cofactor.

It localises to the cytoplasm. The enzyme catalyses 2 D-sedoheptulose 7-phosphate = D-glycero-alpha-D-manno-heptose 7-phosphate + D-glycero-beta-D-manno-heptose 7-phosphate. The protein operates within carbohydrate biosynthesis; D-glycero-D-manno-heptose 7-phosphate biosynthesis; D-glycero-alpha-D-manno-heptose 7-phosphate and D-glycero-beta-D-manno-heptose 7-phosphate from sedoheptulose 7-phosphate: step 1/1. In terms of biological role, catalyzes the isomerization of sedoheptulose 7-phosphate in D-glycero-D-manno-heptose 7-phosphate. This is Phosphoheptose isomerase from Aeromonas salmonicida (strain A449).